The sequence spans 697 residues: PHD finger protein At1g33420 (697 aa).

The segment at 603-653 (KVDCKCGTKDDDGERMLACDGCGVWHHTRCIGINNADALPSKFLCFRCIEL) adopts a PHD-type zinc-finger fold.

The protein resides in the nucleus. This Arabidopsis thaliana (Mouse-ear cress) protein is PHD finger protein At1g33420.